The primary structure comprises 2254 residues: Voltage-dependent T-type calcium channel subunit alpha-1G (2254 aa).

The disordered stretch occupies residues 1 to 48 (MDEEEDGAGAEESGQPRSFTQLNDLSGAGGRQGPGSTEKDPGSADSEA). The Cytoplasmic segment spans residues 1-80 (MDEEEDGAGA…RSWCLRTVCN (80 aa)). The segment covering 15 to 24 (QPRSFTQLND) has biased composition (polar residues). The I repeat unit spans residues 68 to 398 (SRPRSWCLRT…LCLVVIATQF (331 aa)). Residues 81 to 101 (PWFERVSMLVILLNCVTLGMF) form a helical membrane-spanning segment. The Extracellular segment spans residues 102 to 119 (RPCEDIACDSQRCRILQA). The chain crosses the membrane as a helical span at residues 120 to 141 (FDDFIFAFFAVEMVVKMVALGI). Residues 142 to 150 (FGKKCYLGD) are Cytoplasmic-facing. Residues 151–170 (TWNRLDFFIVIAGMLEYSLD) traverse the membrane as a helical segment. Topologically, residues 171-175 (LQNVS) are extracellular. N-linked (GlcNAc...) asparagine glycosylation occurs at N173. A helical membrane pass occupies residues 176–193 (FSAVRTVRVLRPLRAINR). The Cytoplasmic segment spans residues 194–213 (VPSMRILVTLLLDTLPMLGN). Residues 214–234 (VLLLCFFVFFIFGIVGVQLWA) traverse the membrane as a helical segment. Over 235–370 (GLLRNRCFLP…YFVMDAHSFY (136 aa)) the chain is Extracellular. Residues N246, N306, N310, and N322 are each glycosylated (N-linked (GlcNAc...) asparagine). Residues 371–395 (NFIYFILLIIVGSFFMINLCLVVIA) form a helical membrane-spanning segment. The Cytoplasmic portion of the chain corresponds to 396–744 (TQFSETKQRE…DTFRKIVDSK (349 aa)). Residue S467 is modified to Phosphoserine. Residues 494-506 (LVHHHHHHHHHYH) are compositionally biased toward basic residues. 4 disordered regions span residues 494–513 (LVHHHHHHHHHYHLGNGTLR), 525–553 (DANGSRRLMLPPPSTPTPSGGPPRGAESV), 579–598 (ASGRTVGSGKVYPTVHTSPP), and 699–721 (DAQHSDLRDPHSRRRQRSLGPDA). Residues 534 to 545 (LPPPSTPTPSGG) show a composition bias toward pro residues. S716 carries the phosphoserine modification. Residues 730–968 (WRLICDTFRK…LLVAILVEGF (239 aa)) form an II repeat. The chain crosses the membrane as a helical span at residues 745–765 (YFGRGIMIAILVNTLSMGIEY). Topologically, residues 766–778 (HEQPEELTNALEI) are extracellular. Residues 779–800 (SNIVFTSLFALEMLLKLLVYGP) form a helical membrane-spanning segment. The Cytoplasmic segment spans residues 801–806 (FGYIKN). Residues 807–825 (PYNIFDGVIVVISVWEIVG) form a helical membrane-spanning segment. The Extracellular portion of the chain corresponds to 826 to 833 (QQGGGLSV). The helical transmembrane segment at 834 to 857 (LRTFRLMRVLKLVRFLPALQRQLV) threads the bilayer. The Cytoplasmic portion of the chain corresponds to 858–868 (VLMKTMDNVAT). A helical transmembrane segment spans residues 869 to 889 (FCMLLMLFIFIFSILGMHLFG). Over 890–940 (CKFASERDGDTLPDRKNFDSLLWAIVTVFQILTQEDWNKVLYNGMASTSSW) the chain is Extracellular. Residues 941-965 (AALYFIALMTFGNYVLFNLLVAILV) traverse the membrane as a helical segment. At 966 to 1251 (EGFQAEGDAT…SRFRLLCHRI (286 aa)) the chain is on the cytoplasmic side. The disordered stretch occupies residues 1024–1209 (TPMSHPKSSS…GDDDNDEGNL (186 aa)). 2 stretches are compositionally biased toward low complexity: residues 1041 to 1052 (GSGSRRTSSSGS) and 1065 to 1091 (PPSARSSPHSPWSAASSWTSRRSSRNS). 2 stretches are compositionally biased toward acidic residues: residues 1117–1126 (ESQDEEESSE) and 1196–1206 (PQLDGDDDNDE). Residues S1118, S1124, and S1125 each carry the phosphoserine modification. Residues 1242 to 1519 (SRFRLLCHRI…MFVGVVVENF (278 aa)) form an III repeat. Residues 1252 to 1274 (ITHKMFDHVVLVIIFLNCITIAM) form a helical membrane-spanning segment. Topologically, residues 1275 to 1292 (ERPKIDPHSAERIFLTLS) are extracellular. A helical transmembrane segment spans residues 1293–1313 (NYIFTAVFLAEMTVKVVALGW). The Cytoplasmic segment spans residues 1314–1323 (CFGEQAYLRS). Residues 1324–1343 (SWNVLDGLLVLISVIDILVS) traverse the membrane as a helical segment. Residues 1344–1357 (MVSDSGTKILGMLR) lie on the Extracellular side of the membrane. A helical transmembrane segment spans residues 1358–1379 (VLRLLRTLRPLRVISRAQGLKL). Residues 1380–1389 (VVETLMSSLK) lie on the Cytoplasmic side of the membrane. The helical transmembrane segment at 1390–1413 (PIGNIVVICCAFFIIFGILGVQLF) threads the bilayer. Residues 1414 to 1490 (KGKFFVCQGE…DQQPIMNHNP (77 aa)) lie on the Extracellular side of the membrane. N-linked (GlcNAc...) asparagine glycosylation is found at N1427 and N1430. A helical transmembrane segment spans residues 1491-1516 (WMLLYFISFLLIVAFFVLNMFVGVVV). Residues 1517-1578 (ENFHKCRQHQ…RLLVHHLCTS (62 aa)) are Cytoplasmic-facing. One copy of the IV repeat lies at 1564-1822 (DYSRFRLLVH…VVIAVLMKHL (259 aa)). The chain crosses the membrane as a helical span at residues 1579-1599 (HYLDLFITGVIGLNVVTMAME). At 1600-1613 (HYQQPQILDEALKI) the chain is on the extracellular side. A helical transmembrane segment spans residues 1614-1635 (CNYIFTVIFVFESVFKLVAFGF). Residues 1636–1642 (RRFFQDR) are Cytoplasmic-facing. A helical transmembrane segment spans residues 1643–1661 (WNQLDLAIVLLSIMGITLE). The Extracellular segment spans residues 1662–1675 (EIEVNLSLPINPTI). A glycan (N-linked (GlcNAc...) asparagine) is linked at N1666. Residues 1676–1699 (IRIMRVLRIARVLKLLKMAVGMRA) traverse the membrane as a helical segment. At 1700–1713 (LLHTVMQALPQVGN) the chain is on the cytoplasmic side. Residues 1714 to 1734 (LGLLFMLLFFIFAALGVELFG) form a helical membrane-spanning segment. The Extracellular portion of the chain corresponds to 1735-1794 (DLECDETHPCEGLGRHATFRNFGMAFLTLFRVSTGDNWNGIMKDTLRDCDQESTCYNTVI). Residues 1795-1822 (SPIYFVSFVLTAQFVLVNVVIAVLMKHL) form a helical membrane-spanning segment. Topologically, residues 1823 to 2254 (EESNKEAKEE…LSSDPTDMDP (432 aa)) are cytoplasmic. The segment at 2153-2254 (DSGSQPRLCP…LSSDPTDMDP (102 aa)) is disordered. Over residues 2184–2193 (SPPSISIDPP) the composition is skewed to low complexity. Polar residues-rich tracts occupy residues 2220–2232 (PSVSSPLDSTAAS) and 2240–2254 (LSLSGLSSDPTDMDP).

It belongs to the calcium channel alpha-1 subunit (TC 1.A.1.11) family. CACNA1G subfamily. Post-translationally, in response to raising of intracellular calcium, the T-type channels are activated by CaM-kinase II. In terms of tissue distribution, highly expressed in brain. Moderate expression in heart; low expression in placenta, kidney and lung.

It is found in the cell membrane. The protein localises to the cytoplasm. It carries out the reaction Ca(2+)(in) = Ca(2+)(out). Its function is as follows. Voltage-sensitive calcium channels (VSCC) mediate the entry of calcium ions into excitable cells and are also involved in a variety of calcium-dependent processes, including muscle contraction, hormone or neurotransmitter release, gene expression, cell motility, cell division and cell death. The isoform alpha-1G gives rise to T-type calcium currents. T-type calcium channels belong to the 'low-voltage activated (LVA)' group and are strongly blocked by nickel and mibefradil. A particularity of this type of channels is an opening at quite negative potentials and a voltage-dependent inactivation. T-type channels serve pacemaking functions in both central neurons and cardiac nodal cells and support calcium signaling in secretory cells and vascular smooth muscle. They may also be involved in the modulation of firing patterns of neurons which is important for information processing as well as in cell growth processes. This is Voltage-dependent T-type calcium channel subunit alpha-1G (Cacna1g) from Rattus norvegicus (Rat).